The chain runs to 693 residues: CREB-regulated transcription coactivator 2 (693 aa).

The span at 1–20 shows a compositional bias: polar residues; it reads MATSGANGPGSATASASNPR. Residues 1 to 30 form a disordered region; that stretch reads MATSGANGPGSATASASNPRKFSEKIALQK. Residue alanine 2 is modified to N-acetylalanine. Arginine 51 bears the Asymmetric dimethylarginine; by PRMT6 mark. Phosphoserine is present on residues serine 70, serine 86, and serine 90. 3 positions are modified to asymmetric dimethylarginine; by PRMT6: arginine 99, arginine 120, and arginine 123. A Phosphoserine modification is found at serine 136. An asymmetric dimethylarginine; by PRMT6 mark is found at arginine 161 and arginine 168. A Phosphothreonine modification is found at threonine 169. Serine 171 bears the Phosphoserine mark. Residues 174–188 are compositionally biased toward polar residues; it reads ALHTSVMNPSPQDTY. The interval 174–210 is disordered; that stretch reads ALHTSVMNPSPQDTYPSPAAPSVLPSRRGGCLDGETD. Residues 209-215 form a required for interaction with COP1 region; that stretch reads TDSKVPA. Lysine 234 is covalently cross-linked (Glycyl lysine isopeptide (Lys-Gly) (interchain with G-Cter in SUMO2)). The short motif at 271 to 287 is the Nuclear export signal element; sequence TGGSLPDLTNLHFPPPL. Disordered regions lie at residues 271 to 307, 335 to 463, and 476 to 548; these read TGGS…GSST, HSPL…SPTL, and KLPT…QSYH. Serine 274 bears the Phosphoserine; by MARK2 mark. Position 306 is a phosphoserine (serine 306). The span at 339-351 shows a compositional bias: polar residues; sequence SHPSFQSSLSNPN. Low complexity-rich tracts occupy residues 352–378 and 386–424; these read LQAS…SSLA and SLGH…PGAS. 4 positions are modified to phosphoserine: serine 368, serine 393, serine 433, and serine 456. The segment covering 447 to 463 has biased composition (polar residues); that stretch reads SQQQLPKQFSPTMSPTL. Tyrosine 488 carries the phosphotyrosine modification. A phosphoserine mark is found at serine 489 and serine 492. At threonine 501 the chain carries Phosphothreonine. Phosphoserine is present on residues serine 613 and serine 624.

The protein belongs to the TORC family. Binds, as a tetramer, through its N-terminal region, with the bZIP domain of CREB1. 'Arg-314' in the bZIP domain of CREB1 is essential for this interaction. Interaction, via its C-terminal, with TAF4, enhances recruitment of TAF4 to CREB1. Interacts with SIK2. Interacts with 14-3-3 proteins, YWHAB and YWHAG. Interacts (probably when phosphorylated at Ser-171) with YWHAE. Interacts with calmodulin-dependent catalytic subunit PPP3CA/calcineurin A. Interaction with COP1 mediates nuclear export and degradation of CRTC2. In terms of processing, phosphorylation/dephosphorylation states of Ser-171 are required for regulating transduction of CREB activity. CRTCs/TORCs are inactive when phosphorylated, and active when dephosphorylated at this site. This primary site of phosphorylation, is regulated by cAMP and calcium levels and is dependent on the phosphorylation of SIKs (SIK1 and SIK2) by LKB1. Following adenylyl cyclase activation, dephosphorylated at Ser-171 by PPP3CA/calcineurin A resulting in CRTC2 dissociation from 14-3-3 proteins and PPP3CA. Both insulin and AMPK increase this phosphorylation of CRTC2 while glucagon suppresses it. Phosphorylation at Ser-274 by MARK2 is induced under low glucose conditions and dephosphorylated in response to glucose influx. Phosphorylation at Ser-274 promotes interaction with 14-3-3 proteins and translocation to the cytoplasm. Asymmetric dimethylation of arginine resisues by PRMT6 enhances the association of CRTC2 with CREB on the promoters of gluconeogenic genes.

It localises to the cytoplasm. The protein localises to the nucleus. Functionally, transcriptional coactivator for CREB1 which activates transcription through both consensus and variant cAMP response element (CRE) sites. Acts as a coactivator, in the SIK/TORC signaling pathway, being active when dephosphorylated and acts independently of CREB1 'Ser-133' phosphorylation. Enhances the interaction of CREB1 with TAF4. Regulates gluconeogenesis as a component of the LKB1/AMPK/TORC2 signaling pathway. Regulates the expression of specific genes such as the steroidogenic gene, StAR. Potent coactivator of PPARGC1A and inducer of mitochondrial biogenesis in muscle cells. The chain is CREB-regulated transcription coactivator 2 (CRTC2) from Bos taurus (Bovine).